Consider the following 219-residue polypeptide: Ribose-5-phosphate isomerase A (219 aa).

Substrate-binding positions include 28–31 (TGST), 81–84 (DGAD), and 94–97 (KGGG). Glutamate 103 functions as the Proton acceptor in the catalytic mechanism. Lysine 121 contributes to the substrate binding site.

It belongs to the ribose 5-phosphate isomerase family. As to quaternary structure, homodimer.

The enzyme catalyses aldehydo-D-ribose 5-phosphate = D-ribulose 5-phosphate. It functions in the pathway carbohydrate degradation; pentose phosphate pathway; D-ribose 5-phosphate from D-ribulose 5-phosphate (non-oxidative stage): step 1/1. Catalyzes the reversible conversion of ribose-5-phosphate to ribulose 5-phosphate. This is Ribose-5-phosphate isomerase A from Escherichia fergusonii (strain ATCC 35469 / DSM 13698 / CCUG 18766 / IAM 14443 / JCM 21226 / LMG 7866 / NBRC 102419 / NCTC 12128 / CDC 0568-73).